We begin with the raw amino-acid sequence, 2885 residues long: E3 ubiquitin-protein ligase hyd (2885 aa).

The segment at 83 to 138 (SDAKCSTSGGSGTASASKAPSSSRPMARSRARLLRATGRSNSTGQGSGSRSTGVII) is disordered. Low complexity-rich tracts occupy residues 95–108 (TASA…SRPM) and 116–138 (LRAT…GVII). The UBA domain maps to 154–196 (YVPEELISQAEVVLQGKSRNLIIRELQRTNLDVNLAVNNLLSR). Residues 266 to 276 (ANANAADSNQS) are compositionally biased toward low complexity. Disordered regions lie at residues 266–291 (ANAN…TGNS), 580–664 (NNLN…GRKD), and 711–731 (AATS…KEDD). Composition is skewed to polar residues over residues 277-291 (TTRS…TGNS) and 598-615 (AMPS…SNSK). 2 positions are modified to phosphoserine: Ser-628 and Ser-631. A compositionally biased stretch (basic and acidic residues) spans 650-664 (TTKEDSNAPQEGRKD). A compositionally biased stretch (low complexity) spans 711–722 (AATSSTSNTAST). Ser-967 carries the post-translational modification Phosphoserine. Over residues 1008–1032 (ASSSNENSSFATMSSSAAGSASSTS) the composition is skewed to low complexity. Residues 1008–1035 (ASSSNENSSFATMSSSAAGSASSTSRDN) are disordered. The UBR-type zinc finger occupies 1217 to 1285 (DTCSFTWTGA…EKCKCKALIA (69 aa)). Position 1362 is a phosphoserine (Ser-1362). Positions 1642–1761 (NEDGMQDDES…IRSRDTARSS (120 aa)) are disordered. A compositionally biased stretch (polar residues) spans 1669–1681 (NQSNQEVQRSVQA). The span at 1696-1721 (LEDESGDSSAQEEDGSEDGESDDQSD) shows a compositional bias: acidic residues. The span at 1735–1749 (TNSNARSDLAPQTMQ) shows a compositional bias: polar residues. Residue Ser-2037 is modified to Phosphoserine. Residues 2124 to 2143 (IDSSKTGDGNVTNKAEGSTD) form a disordered region. Ser-2183 is subject to Phosphoserine. The disordered stretch occupies residues 2473-2492 (NLDARPYTPPNSSDNATPES). A compositionally biased stretch (polar residues) spans 2482 to 2492 (PNSSDNATPES). Residues 2484-2561 (SSDNATPESL…AIEIITFKQK (78 aa)) form the PABC domain. A Phosphoserine modification is found at Ser-2574. The HECT domain occupies 2782-2885 (FNDESSEGPD…AIKSKNFGFV (104 aa)). The active-site Glycyl thioester intermediate is the Cys-2854.

This sequence belongs to the UBR5 family.

The protein resides in the nucleus. The protein localises to the cytoplasm. It carries out the reaction S-ubiquitinyl-[E2 ubiquitin-conjugating enzyme]-L-cysteine + [acceptor protein]-L-lysine = [E2 ubiquitin-conjugating enzyme]-L-cysteine + N(6)-ubiquitinyl-[acceptor protein]-L-lysine.. The protein operates within protein modification; protein ubiquitination. In terms of biological role, E3 ubiquitin-protein ligase which accepts ubiquitin from an E2 ubiquitin-conjugating enzyme in the form of a thioester and then directly transfers the ubiquitin to targeted substrate. Required for regulation of cell proliferation in imaginal disks and germ cells. Acts as a negative regulator of hh, ci and dpp expression in the anterior of the eye disk. Acts as a positive regulator of the canonical Wnt signaling pathway by mediating ubiquitination and degradation of gro. Catalyzes 'Lys-63'-linked polyubiquitination of akirin, thereby activating the immune deficiency pathway (Imd). The protein is E3 ubiquitin-protein ligase hyd (hyd) of Drosophila melanogaster (Fruit fly).